Reading from the N-terminus, the 148-residue chain is MRTYSPKAGEVTHAWHVIDAEDVVLGRLATQAALLLRGKHKPTYAPHVDTGDFVVVVNAEKVALTGNKRDQAFHYRHSGYPGGLRKQSFGQVLDKHPERLLEKAIKGMLPKNKLGRAMGKKLKVYAGPEHPHQAQNPQPFEINAKVEK.

Positions Pro-128–Lys-148 are disordered.

The protein belongs to the universal ribosomal protein uL13 family. Part of the 50S ribosomal subunit.

Functionally, this protein is one of the early assembly proteins of the 50S ribosomal subunit, although it is not seen to bind rRNA by itself. It is important during the early stages of 50S assembly. This is Large ribosomal subunit protein uL13 from Saccharopolyspora erythraea (strain ATCC 11635 / DSM 40517 / JCM 4748 / NBRC 13426 / NCIMB 8594 / NRRL 2338).